A 507-amino-acid chain; its full sequence is ATP synthase subunit alpha (507 aa).

Glycine 169 to threonine 176 serves as a coordination point for ATP.

This sequence belongs to the ATPase alpha/beta chains family. As to quaternary structure, F-type ATPases have 2 components, CF(1) - the catalytic core - and CF(0) - the membrane proton channel. CF(1) has five subunits: alpha(3), beta(3), gamma(1), delta(1), epsilon(1). CF(0) has three main subunits: a(1), b(2) and c(9-12). The alpha and beta chains form an alternating ring which encloses part of the gamma chain. CF(1) is attached to CF(0) by a central stalk formed by the gamma and epsilon chains, while a peripheral stalk is formed by the delta and b chains. In this bacterium the a and b subunits are transcribed but do not seem to be translated, thus the ATP synthase consists of the alpha, beta, gamma, delta, epsilon and c subunits.

It is found in the cell membrane. It carries out the reaction ATP + H2O + 4 H(+)(in) = ADP + phosphate + 5 H(+)(out). Produces ATP from ADP in the presence of a proton gradient across the membrane. The alpha chain is a regulatory subunit. This Moorella thermoacetica (strain ATCC 39073 / JCM 9320) protein is ATP synthase subunit alpha.